A 377-amino-acid polypeptide reads, in one-letter code: Membrane progestin receptor epsilon (377 aa).

The disordered stretch occupies residues Met1–Ser40. The Cytoplasmic segment spans residues Met1–Asn86. The segment covering Gly9–Ala26 has biased composition (low complexity). A helical membrane pass occupies residues Phe87–Leu107. The Extracellular segment spans residues Ser108–His116. A helical membrane pass occupies residues Pro117–Cys137. Over Thr138–Ser162 the chain is Cytoplasmic. Residues Tyr163–Leu183 traverse the membrane as a helical segment. The Extracellular portion of the chain corresponds to Asp184–Leu205. A helical transmembrane segment spans residues Ile206–Val226. Residues Ala227 to Arg243 lie on the Cytoplasmic side of the membrane. A helical transmembrane segment spans residues Thr244–Phe264. Over Asp265–Pro301 the chain is Extracellular. Residues Gly302 to Ile322 traverse the membrane as a helical segment. Residues Tyr323 to Ala343 are Cytoplasmic-facing. A helical transmembrane segment spans residues Pro344–Ile364. The Extracellular portion of the chain corresponds to Arg365–Lys377.

Belongs to the ADIPOR family. Homodimer. Expression levels vary widely in a range of tissues. Expressed in the brain, at high level in the pituitary gland and also in hypothalamus, limbic system, caudate nucleus accumens, pons and olfactory bulb.

The protein localises to the cell membrane. Plasma membrane progesterone (P4) receptor coupled to G proteins. Seems to act through a G(s) mediated pathway. May be involved in regulating rapid P4 signaling in the nervous system. Also binds dehydroepiandrosterone (DHEA), pregnanolone, pregnenolone and allopregnanolone. The protein is Membrane progestin receptor epsilon of Homo sapiens (Human).